Consider the following 427-residue polypeptide: Glutamate-1-semialdehyde 2,1-aminomutase 1 (427 aa).

An N6-(pyridoxal phosphate)lysine modification is found at K265.

Belongs to the class-III pyridoxal-phosphate-dependent aminotransferase family. HemL subfamily. In terms of assembly, homodimer. Pyridoxal 5'-phosphate serves as cofactor.

It localises to the cytoplasm. It carries out the reaction (S)-4-amino-5-oxopentanoate = 5-aminolevulinate. The protein operates within porphyrin-containing compound metabolism; protoporphyrin-IX biosynthesis; 5-aminolevulinate from L-glutamyl-tRNA(Glu): step 2/2. This is Glutamate-1-semialdehyde 2,1-aminomutase 1 from Lachnoclostridium phytofermentans (strain ATCC 700394 / DSM 18823 / ISDg) (Clostridium phytofermentans).